Consider the following 377-residue polypeptide: Histone deacetylase 8 (377 aa).

The histone deacetylase stretch occupies residues 14–324 (LPPVYIYSPE…WTYLTGVILG (311 aa)). S39 bears the Phosphoserine mark. D101 is a binding site for substrate. Residue H143 is the Proton acceptor of the active site. Substrate is bound at residue G151. A divalent metal cation is bound by residues D178, H180, and D267. Y306 contributes to the substrate binding site.

This sequence belongs to the histone deacetylase family. HD type 1 subfamily. As to quaternary structure, interacts with CBFA2T3. Interacts with phosphorylated SMG5/EST1B; this interaction protects SMG5 from ubiquitin-mediated degradation. Associates with alpha-SMA (smooth muscle alpha-actin). A divalent metal cation serves as cofactor. In terms of processing, phosphorylated by PKA on serine 39. Phosphorylation reduces deacetylase activity observed preferentially on histones H3 and H4.

Its subcellular location is the nucleus. It localises to the chromosome. It is found in the cytoplasm. The enzyme catalyses N(6)-acetyl-L-lysyl-[histone] + H2O = L-lysyl-[histone] + acetate. The catalysed reaction is N(6)-acetyl-L-lysyl-[protein] + H2O = L-lysyl-[protein] + acetate. It catalyses the reaction N(6)-(2E)-butenoyl-L-lysyl-[protein] + H2O = (2E)-2-butenoate + L-lysyl-[protein]. Its activity is regulated as follows. Its activity is inhibited by trichostatin A (TSA) and butyrate, 2 well known histone deacetylase inhibitors. histone deacetylase inhibitor. Histone deacetylase that catalyzes the deacetylation of lysine residues on the N-terminal part of the core histones (H2A, H2B, H3 and H4). Histone deacetylation gives a tag for epigenetic repression and plays an important role in transcriptional regulation, cell cycle progression and developmental events. Histone deacetylases act via the formation of large multiprotein complexes. Also involved in the deacetylation of cohesin complex protein SMC3 regulating release of cohesin complexes from chromatin. May play a role in smooth muscle cell contractility. In addition to protein deacetylase activity, also has protein-lysine deacylase activity: acts as a protein decrotonylase by mediating decrotonylation ((2E)-butenoyl) of histones. In Mus musculus (Mouse), this protein is Histone deacetylase 8 (Hdac8).